Here is a 147-residue protein sequence, read N- to C-terminus: Large ribosomal subunit protein bL9 (147 aa).

This sequence belongs to the bacterial ribosomal protein bL9 family.

Its function is as follows. Binds to the 23S rRNA. This Campylobacter jejuni subsp. jejuni serotype O:2 (strain ATCC 700819 / NCTC 11168) protein is Large ribosomal subunit protein bL9.